The primary structure comprises 260 residues: 3-alpha-(or 20-beta)-hydroxysteroid dehydrogenase (260 aa).

Residues R17, M19, D38, D61, V62, N88, Y153, K157, V186, T188, and T191 each contribute to the NAD(+) site. Y153 serves as the catalytic Proton acceptor.

It belongs to the short-chain dehydrogenases/reductases (SDR) family. In terms of assembly, homotetramer.

The catalysed reaction is androstan-3alpha,17beta-diol + NAD(+) = 17beta-hydroxyandrostanone + NADH + H(+). Its pathway is lipid metabolism; steroid degradation. Probably involved in steroid metabolism. This Mycobacterium bovis (strain ATCC BAA-935 / AF2122/97) protein is 3-alpha-(or 20-beta)-hydroxysteroid dehydrogenase (fabG3).